The chain runs to 462 residues: Annexin A7 (462 aa).

The segment at 1–130 is disordered; it reads MSYPPNQGYP…QGYPPQQGYP (130 aa). Residues 7–131 form a 19 X 6 AA tandem repeats of Q-G-Y-P-P-Q region; it reads QGYPPQSNSP…GYPPQQGYPP (125 aa). Residues 16-130 are compositionally biased toward low complexity; sequence PQPGQYGAPQ…QGYPPQQGYP (115 aa). Annexin repeat units lie at residues 161 to 232, 233 to 304, 315 to 388, and 392 to 462; these read HDCK…ALLT, EPAH…KLTE, MQVS…AIVT, and NPYG…DIIS.

It belongs to the annexin family.

Its function is as follows. Calcium/phospholipid-binding protein which promotes membrane fusion and is involved in exocytosis. In Dictyostelium discoideum (Social amoeba), this protein is Annexin A7 (nxnA).